The sequence spans 543 residues: Chaperonin GroEL (543 aa).

ATP contacts are provided by residues 29 to 32 (TLGP), Lys-50, 86 to 90 (DGTTT), Gly-415, and Asp-495.

This sequence belongs to the chaperonin (HSP60) family. In terms of assembly, forms a cylinder of 14 subunits composed of two heptameric rings stacked back-to-back. Interacts with the co-chaperonin GroES.

It is found in the cytoplasm. The catalysed reaction is ATP + H2O + a folded polypeptide = ADP + phosphate + an unfolded polypeptide.. Functionally, together with its co-chaperonin GroES, plays an essential role in assisting protein folding. The GroEL-GroES system forms a nano-cage that allows encapsulation of the non-native substrate proteins and provides a physical environment optimized to promote and accelerate protein folding. In Karelsulcia muelleri (strain GWSS) (Sulcia muelleri), this protein is Chaperonin GroEL.